The following is a 249-amino-acid chain: Probable transcriptional regulatory protein Rru_A1086 (249 aa).

The protein belongs to the TACO1 family.

It localises to the cytoplasm. This Rhodospirillum rubrum (strain ATCC 11170 / ATH 1.1.1 / DSM 467 / LMG 4362 / NCIMB 8255 / S1) protein is Probable transcriptional regulatory protein Rru_A1086.